The sequence spans 70 residues: Conotoxin Cl6.13 (70 aa).

Positions 1-21 (MKFPLLFISLALAAFLTRVQD) are cleaved as a signal peptide. Positions 22–33 (ADSSVISKEKSV) are excised as a propeptide. Cystine bridges form between Cys41–Cys58, Cys48–Cys63, and Cys57–Cys68.

As to expression, expressed by the venom duct.

Its subcellular location is the secreted. The polypeptide is Conotoxin Cl6.13 (Californiconus californicus (California cone)).